Here is a 500-residue protein sequence, read N- to C-terminus: Lycopene beta cyclase, chloroplastic (500 aa).

The N-terminal 81 residues, 1 to 81 (MDTLLKTPNK…ELPMYDPSKG (81 aa)), are a transit peptide targeting the chloroplast. 86–114 (LAVVGGGPAGLAVAQQVSEAGLSVVSIDP) serves as a coordination point for NAD(+).

The protein belongs to the lycopene cyclase family.

It is found in the plastid. It localises to the chloroplast. It catalyses the reaction a carotenoid psi-end group = a carotenoid beta-end derivative. Its pathway is carotenoid biosynthesis; beta-carotene biosynthesis. It participates in carotenoid biosynthesis; beta-zeacarotene biosynthesis. Functionally, catalyzes the double cyclization reaction which converts lycopene to beta-carotene and neurosporene to beta-zeacarotene. This is Lycopene beta cyclase, chloroplastic (LCY1) from Nicotiana tabacum (Common tobacco).